The sequence spans 491 residues: 3-octaprenyl-4-hydroxybenzoate carboxy-lyase (491 aa).

Asparagine 176 contacts Mn(2+). Residues 179 to 181 (IYR), 193 to 195 (RWL), and 198 to 199 (RG) contribute to the prenylated FMN site. Residue glutamate 242 coordinates Mn(2+). Catalysis depends on aspartate 291, which acts as the Proton donor.

This sequence belongs to the UbiD family. In terms of assembly, homohexamer. Requires prenylated FMN as cofactor. Mn(2+) serves as cofactor.

The protein resides in the cell membrane. The enzyme catalyses a 4-hydroxy-3-(all-trans-polyprenyl)benzoate + H(+) = a 2-(all-trans-polyprenyl)phenol + CO2. The protein operates within cofactor biosynthesis; ubiquinone biosynthesis. In terms of biological role, catalyzes the decarboxylation of 3-octaprenyl-4-hydroxy benzoate to 2-octaprenylphenol, an intermediate step in ubiquinone biosynthesis. The protein is 3-octaprenyl-4-hydroxybenzoate carboxy-lyase of Chromobacterium violaceum (strain ATCC 12472 / DSM 30191 / JCM 1249 / CCUG 213 / NBRC 12614 / NCIMB 9131 / NCTC 9757 / MK).